We begin with the raw amino-acid sequence, 526 residues long: Triacylglycerol lipase OBL1 (526 aa).

The chain crosses the membrane as a helical span at residues 79–99; it reads GHLTDFLLNFYYQNHGFLGIL. Residues 338–342 carry the GXSXG motif; the sequence is GHSLG. The Nucleophile role is filled by Ser340. Catalysis depends on charge relay system residues Asp404 and His497.

This sequence belongs to the AB hydrolase superfamily. Lipase family.

It is found in the membrane. It carries out the reaction a triacylglycerol + H2O = a diacylglycerol + a fatty acid + H(+). Functionally, acid lipase that can hydrolyze a range of triacylglycerols but is not active on phospholipids. In vitro, hydrolyzes triolein, trilinolein, triricinolein, tripalmitin, trilaurin and tricaprin. May play a role in the regulation of lipolysis in germinating seeds. In Ricinus communis (Castor bean), this protein is Triacylglycerol lipase OBL1.